The chain runs to 397 residues: Subtilisin-like protease 12 (397 aa).

The signal sequence occupies residues 1 to 19; the sequence is MSIFKLMVIYFTLFWVVNA. Residues 20–116 constitute a propeptide that is removed on maturation; that stretch reads AQLLDLDSHG…VEPNREMKAA (97 aa). The region spanning 35 to 115 is the Inhibitor I9 domain; that stretch reads YIVVMKNGVS…FVEPNREMKA (81 aa). 3 N-linked (GlcNAc...) asparagine glycosylation sites follow: Asn123, Asn136, and Asn150. Positions 125–397 constitute a Peptidase S8 domain; the sequence is TWGLARISHM…DKLLYNGSGA (273 aa). Active-site charge relay system residues include Asp157 and His188. 3 N-linked (GlcNAc...) asparagine glycosylation sites follow: Asn249, Asn305, and Asn334. Ser343 functions as the Charge relay system in the catalytic mechanism. N-linked (GlcNAc...) asparagine glycans are attached at residues Asn385 and Asn393.

It belongs to the peptidase S8 family.

It localises to the secreted. Secreted subtilisin-like serine protease with keratinolytic activity that contributes to pathogenicity. This chain is Subtilisin-like protease 12 (SUB12), found in Arthroderma gypseum (strain ATCC MYA-4604 / CBS 118893) (Microsporum gypseum).